The primary structure comprises 886 residues: MIAKNFLLLLCFIALVNVESSPDEAVMIALRDSLKLSGNPNWSGSDPCKWSMFIKCDASNRVTAIQIGDRGISGKLPPDLGKLTSLTKFEVMRNRLTGPIPSLAGLKSLVTVYANDNDFTSVPEDFFSGLSSLQHVSLDNNPFDSWVIPPSLENATSLVDFSAVNCNLSGKIPDYLFEGKDFSSLTTLKLSYNSLVCEFPMNFSDSRVQVLMLNGQKGREKLHGSISFLQKMTSLTNVTLQGNSFSGPLPDFSGLVSLKSFNVRENQLSGLVPSSLFELQSLSDVALGNNLLQGPTPNFTAPDIKPDLNGLNSFCLDTPGTSCDPRVNTLLSIVEAFGYPVNFAEKWKGNDPCSGWVGITCTGTDITVINFKNLGLNGTISPRFADFASLRVINLSQNNLNGTIPQELAKLSNLKTLDVSKNRLCGEVPRFNTTIVNTTGNFEDCPNGNAGKKASSNAGKIVGSVIGILLALLLIGVAIFFLVKKKMQYHKMHPQQQSSDQDAFKITIENLCTGVSESGFSGNDAHLGEAGNIVISIQVLRDATYNFDEKNILGRGGFGIVYKGELHDGTKIAVKRMESSIISGKGLDEFKSEIAVLTRVRHRNLVVLHGYCLEGNERLLVYQYMPQGTLSRHIFYWKEEGLRPLEWTRRLIIALDVARGVEYLHTLAHQSFIHRDLKPSNILLGDDMHAKVADFGLVRLAPEGTQSIETKIAGTFGYLAPEYAVTGRVTTKVDVYSFGVILMELLTGRKALDVARSEEEVHLATWFRRMFINKGSFPKAIDEAMEVNEETLRSINIVAELANQCSSREPRDRPDMNHVVNVLVSLVVQWKPTERSSDSEDIYGIDYDTPLPQLILDSCFFGDNTLTSIPSRPSELESTFKSGQGR.

A signal peptide spans 1-20; it reads MIAKNFLLLLCFIALVNVES. The Extracellular portion of the chain corresponds to 21-460; the sequence is SPDEAVMIAL…GKKASSNAGK (440 aa). The N-linked (GlcNAc...) asparagine glycan is linked to Asn-41. Residues Cys-48 and Cys-56 are joined by a disulfide bond. LRR repeat units lie at residues 59–83, 84–106, 107–129, 131–155, 157–179, 182–206, 208–232, 233–254, 255–279, and 281–302; these read SNRV…LGKL, TSLT…LAGL, KSLV…FFSG, SSLQ…LENA, SLVD…LFEG, FSSL…FSDS, VQVL…LQKM, TSLT…DFSG, LVSL…LFEL, and SLSD…FTAP. 3 N-linked (GlcNAc...) asparagine glycosylation sites follow: Asn-154, Asn-167, and Asn-202. Asn-237 is a glycosylation site (N-linked (GlcNAc...) asparagine). Asn-298 is a glycosylation site (N-linked (GlcNAc...) asparagine). Disulfide bonds link Cys-315/Cys-323 and Cys-353/Cys-361. LRR repeat units follow at residues 363 to 386, 387 to 410, and 411 to 438; these read GTDI…RFAD, FASL…ELAK, and LSNL…IVNT. Residues Asn-377, Asn-394, Asn-401, Asn-432, and Asn-437 are each glycosylated (N-linked (GlcNAc...) asparagine). The helical transmembrane segment at 461 to 481 threads the bilayer; sequence IVGSVIGILLALLLIGVAIFF. Residues 482-886 lie on the Cytoplasmic side of the membrane; that stretch reads LVKKKMQYHK…ESTFKSGQGR (405 aa). One can recognise a Protein kinase domain in the interval 547 to 827; sequence FDEKNILGRG…HVVNVLVSLV (281 aa). ATP-binding positions include 553–561 and Lys-575; that span reads LGRGGFGIV. Asp-676 functions as the Proton acceptor in the catalytic mechanism.

This sequence belongs to the protein kinase superfamily. Ser/Thr protein kinase family. In terms of tissue distribution, expressed in siliques and flowers.

Its subcellular location is the membrane. The catalysed reaction is L-seryl-[protein] + ATP = O-phospho-L-seryl-[protein] + ADP + H(+). It carries out the reaction L-threonyl-[protein] + ATP = O-phospho-L-threonyl-[protein] + ADP + H(+). In terms of biological role, involved in auxin signal transduction and cell expansion and proliferation regulation. The sequence is that of Receptor-like kinase TMK2 from Arabidopsis thaliana (Mouse-ear cress).